The chain runs to 328 residues: Fructosamine deglycase FrlB (328 aa).

2 consecutive SIS domains span residues 15–153 (FLQD…VLEN) and 181–311 (NAKQ…ELAE).

Homooctamer.

In terms of biological role, catalyzes the conversion of a range of fructosamine 6-phosphates to glucose 6-phosphate and a free amino acid. This Bacillus subtilis (strain 168) protein is Fructosamine deglycase FrlB (frlB).